The following is a 322-amino-acid chain: Pyridoxal kinase (322 aa).

At Met1 the chain carries N-acetylmethionine. Residues Ser22 and Thr57 each contribute to the pyridoxal site. Thr57 serves as a coordination point for pyridoxal 5'-phosphate. Ser69 bears the Phosphoserine mark. Residue Asp123 participates in ATP binding. A Na(+)-binding site is contributed by Asp123. Mg(2+) is bound at residue Asp128. Residue Thr158 coordinates Na(+). 160–163 (NQFE) is an ATP binding site. A Phosphoserine modification is found at Ser174. Na(+) is bound at residue Thr196. An ATP-binding site is contributed by 196 to 197 (TS). Ser223 is subject to Phosphoserine. Residues 236-238 (VDA) and Thr243 contribute to the ATP site. Residue 244–245 (GD) participates in pyridoxal 5'-phosphate binding. Asp245 serves as the catalytic Proton acceptor. Ser295 is modified (phosphoserine).

The protein belongs to the pyridoxine kinase family. In terms of assembly, homodimer. The cofactor is Zn(2+). It depends on Mg(2+) as a cofactor. Post-translationally, the N-terminus is blocked.

The protein resides in the cytoplasm. It localises to the cytosol. The catalysed reaction is pyridoxal + ATP = pyridoxal 5'-phosphate + ADP + H(+). The enzyme catalyses pyridoxamine + ATP = pyridoxamine 5'-phosphate + ADP + H(+). It carries out the reaction pyridoxine + ATP = pyridoxine 5'-phosphate + ADP + H(+). It participates in cofactor metabolism; pyridoxal 5'-phosphate salvage; pyridoxal 5'-phosphate from pyridoxal: step 1/1. The protein operates within cofactor metabolism; pyridoxal 5'-phosphate salvage; pyridoxine 5'-phosphate from pyridoxine: step 1/1. It functions in the pathway cofactor metabolism; pyridoxal 5'-phosphate salvage; pyridoxamine 5'-phosphate from pyridoxamine: step 1/1. Its activity is regulated as follows. Activity is increased in the presence of K(+)or Na(+). Catalyzes the phosphorylation of the dietary vitamin B6 vitamers pyridoxal (PL), pyridoxine (PN) and pyridoxamine (PM) to form pyridoxal 5'-phosphate (PLP), pyridoxine 5'-phosphate (PNP) and pyridoxamine 5'-phosphate (PMP), respectively. PLP is the active form of vitamin B6, and acts as a cofactor for over 140 different enzymatic reactions. The protein is Pyridoxal kinase (PDXK) of Sus scrofa (Pig).